A 252-amino-acid polypeptide reads, in one-letter code: Neurexophilin-3 (252 aa).

An N-terminal signal peptide occupies residues 1–22 (MQLTRCCFVFLVQGSLYLVICG). The tract at residues 23-75 (QEDGPPGSEDPEHDDHEGQPRPRVPRKRGHISPKSRPLANSTLLGLLAPPGEV) is II. The segment at 27-59 (PPGSEDPEHDDHEGQPRPRVPRKRGHISPKSRP) is disordered. A compositionally biased stretch (basic residues) spans 45–55 (RVPRKRGHISP). N-linked (GlcNAc...) asparagine glycosylation is found at Asn-62, Asn-127, Asn-137, and Asn-143. The tract at residues 76 to 157 (WGILGQPPNR…LVPPSKAVEF (82 aa)) is III. Residues 158–166 (HQEQQIFIE) form an IV (linker domain) region. The interval 167-252 (AKASKIFNCR…HSDTPYYPSG (86 aa)) is v (Cys-rich).

It belongs to the neurexophilin family. Post-translationally, may be proteolytically processed at the boundary between the N-terminal non-conserved and the central conserved domain in neuron-like cells. Brain. Detected in several other tissues.

Its subcellular location is the secreted. In terms of biological role, may be signaling molecules that resemble neuropeptides. Ligand for alpha-neurexins. The chain is Neurexophilin-3 (Nxph3) from Rattus norvegicus (Rat).